Here is a 448-residue protein sequence, read N- to C-terminus: N-succinylarginine dihydrolase (448 aa).

Substrate is bound by residues Gly19–Ser28, Asn110, and His137–Arg138. Glu174 is a catalytic residue. Arg214 is a substrate binding site. His250 is an active-site residue. 2 residues coordinate substrate: Asp252 and Asn365. The active-site Nucleophile is Cys371.

Belongs to the succinylarginine dihydrolase family. In terms of assembly, homodimer.

The enzyme catalyses N(2)-succinyl-L-arginine + 2 H2O + 2 H(+) = N(2)-succinyl-L-ornithine + 2 NH4(+) + CO2. Its pathway is amino-acid degradation; L-arginine degradation via AST pathway; L-glutamate and succinate from L-arginine: step 2/5. In terms of biological role, catalyzes the hydrolysis of N(2)-succinylarginine into N(2)-succinylornithine, ammonia and CO(2). The sequence is that of N-succinylarginine dihydrolase from Pseudomonas aeruginosa (strain UCBPP-PA14).